A 578-amino-acid polypeptide reads, in one-letter code: Lysine--tRNA ligase (578 aa).

Mg(2+)-binding residues include E414 and E421.

Belongs to the class-II aminoacyl-tRNA synthetase family. Homodimer. It depends on Mg(2+) as a cofactor.

It is found in the cytoplasm. The enzyme catalyses tRNA(Lys) + L-lysine + ATP = L-lysyl-tRNA(Lys) + AMP + diphosphate. The chain is Lysine--tRNA ligase from Porphyromonas gingivalis (strain ATCC 33277 / DSM 20709 / CIP 103683 / JCM 12257 / NCTC 11834 / 2561).